Reading from the N-terminus, the 397-residue chain is Na(+)/H(+) antiporter NhaA 3 (397 aa).

A run of 11 helical transmembrane segments spans residues 18-38, 63-83, 98-118, 129-149, 158-178, 181-201, 207-224, 269-289, 306-326, 340-360, and 373-393; these read AGGI…NSPF, LLLW…GLEL, IALP…IYWW, GWAI…ALLG, IFLT…IAFF, SKIS…LFIC, TTLR…VALL, VAFL…FIGM, LFFG…LFGW, GVAV…SLAF, and LGIV…LRSA.

The protein belongs to the NhaA Na(+)/H(+) (TC 2.A.33) antiporter family.

Its subcellular location is the cell inner membrane. The catalysed reaction is Na(+)(in) + 2 H(+)(out) = Na(+)(out) + 2 H(+)(in). Na(+)/H(+) antiporter that extrudes sodium in exchange for external protons. The chain is Na(+)/H(+) antiporter NhaA 3 from Saccharophagus degradans (strain 2-40 / ATCC 43961 / DSM 17024).